A 225-amino-acid chain; its full sequence is Ribonuclease 3 (225 aa).

Residues 4–133 (FEKLEKLLGY…LIAAIYLDSN (130 aa)) form the RNase III domain. Glu46 is a binding site for Mg(2+). The active site involves Asp50. The Mg(2+) site is built by Asn119 and Glu122. Residue Glu122 is part of the active site. The DRBM domain maps to 158 to 225 (DPKTALQEWA…AARKLLHKLK (68 aa)).

The protein belongs to the ribonuclease III family. Homodimer. It depends on Mg(2+) as a cofactor.

It localises to the cytoplasm. It carries out the reaction Endonucleolytic cleavage to 5'-phosphomonoester.. Its function is as follows. Digests double-stranded RNA. Involved in the processing of primary rRNA transcript to yield the immediate precursors to the large and small rRNAs (23S and 16S). Processes some mRNAs, and tRNAs when they are encoded in the rRNA operon. Processes pre-crRNA and tracrRNA of type II CRISPR loci if present in the organism. The sequence is that of Ribonuclease 3 from Rickettsia felis (strain ATCC VR-1525 / URRWXCal2) (Rickettsia azadi).